A 302-amino-acid polypeptide reads, in one-letter code: Large ribosomal subunit protein bL28m (302 aa).

It belongs to the bacterial ribosomal protein bL28 family. In terms of assembly, component of the mitochondrial ribosome large subunit (39S) which comprises a 16S rRNA and about 50 distinct proteins.

It is found in the mitochondrion. This is Large ribosomal subunit protein bL28m (mRpL28) from Drosophila melanogaster (Fruit fly).